A 296-amino-acid chain; its full sequence is Nucleotide-binding protein Rmet_0297 (296 aa).

Residue 8–15 (GISGSGKS) coordinates ATP. GTP is bound at residue 57-60 (DIRS).

This sequence belongs to the RapZ-like family.

Its function is as follows. Displays ATPase and GTPase activities. In Cupriavidus metallidurans (strain ATCC 43123 / DSM 2839 / NBRC 102507 / CH34) (Ralstonia metallidurans), this protein is Nucleotide-binding protein Rmet_0297.